The following is a 434-amino-acid chain: Gamma-glutamyl phosphate reductase (434 aa).

Belongs to the gamma-glutamyl phosphate reductase family.

The protein localises to the cytoplasm. It carries out the reaction L-glutamate 5-semialdehyde + phosphate + NADP(+) = L-glutamyl 5-phosphate + NADPH + H(+). Its pathway is amino-acid biosynthesis; L-proline biosynthesis; L-glutamate 5-semialdehyde from L-glutamate: step 2/2. In terms of biological role, catalyzes the NADPH-dependent reduction of L-glutamate 5-phosphate into L-glutamate 5-semialdehyde and phosphate. The product spontaneously undergoes cyclization to form 1-pyrroline-5-carboxylate. The polypeptide is Gamma-glutamyl phosphate reductase (Trichormus variabilis (strain ATCC 29413 / PCC 7937) (Anabaena variabilis)).